The sequence spans 1376 residues: MVPGEENQLVPKEDVFWRCRQNIFDEMKKKFLQIENAAEEPRVLCIIQDTTNSKTVSERITLNLPASTPVRKLFEDVANKVGYINGTFDLTRENGVTTADMAPLDHTSDKSLLDANFEPGKKNFLHLTDKDGEPPQMLLEDSNNVDDSVHDRFIGPLPREGSVASTNDYVSQNYSYSSILNKSETGYVGLVNQAMTCYLNSLLQTLFMTPEFRNALYKWEFEDSEEDPVTSIPYQLQRLFVLLQTSKKRAIETTDVTRSFGWDSSEAWQQHDVQELCRVMFDALEQKWKQTEQADLINELYQGKLKDYVRCLECGYEGWRIDTYLDIPLVIRPYGSSQAFASVEEALHAFIQPEILDGPNQYFCERCKKKCDARKGLRFLHFPYLLTLQLKRFDFDYTTMHRIKLNDRMSFPEELDMSTFIDIEDEKSPQTESCTDSGAENEGSCHSDQMSNDFSTDDAVDEGICLESSSGSEKISKPGLEKNSLMYELFSVMVHSGSAAGGHYYACIKSFSDDQWYSFNDQHVSRITQEDIKKTHGGSSGSRGYYSSAFASSTNAYMLIYRLKDPTRNAKFLEVDEYPEHIKNLVQKERELEEQEKRQREIERNTCKIKLFCLHPVKQVMMENKLEVHKDKTLKEAVEMAYKMMDLEDVIPLDCCRLVKYDEFHDYLERSYEGEEDTPMGLLLGGVKSTYMFDLLLETRKPDQIFQSYKPGEVMVKVHVVDLKAETVAAPVTVRAYLNQTVTEFKQLISKATHLPADSMRIVLERCYNDLRLLSMPSKTLKAEGFFRSNKVFVESSETVDHQAAFTDSHLWKLLDRHANTIRLFVLLPEQSPGSYSKRTAYQKAGGDSGNVDDDCERVKGPAGNLKSVDAILEESTEKLKSLSLQQQQQDGDNGDSSKSTETSDFENIESPLNERGSSTSVDNRELEQHIQTSDPENFQSEERSDSDVNNDRSTSSVDSDILSSSHSSDTLCNADSAQIPLANGLDSHSITSSRRTKANEGKKETWDTAEEDSGTDSEYDESGKSRGDMQYMYFKADPYTADEGSGEGHKWLMVHVDKRITLAAFKQHLEPFVGVLSSHFKVFRVYTSNQEFETVRLNETLSSFSDDNKITIRLGRALKKGEYRVKVCQLLVNEQEPCKFLLDAVFAKGMTVRQSKEELIPQLREQCGLDLSIDRFRLRKKTWKNPGTVFLDYHIYEEDINISSNWEVFLEVLDGVEKMKSMSQLAILTRRWRPAEMKLDPFQELVLESNSVDELREKLSEISGIPLEDIEFAKGRGTFPCDISVLDIHQDLDWNPKVSTLNVWPLYICDDGAVIFYRDRTEEVMELTDEQRNELMKKESSRLQKTGHRVTYSPRKEKALKIYLDGAPNKDVAQD.

K122 carries the post-translational modification N6-acetyllysine. The region spanning V188–K564 is the USP domain. C197 serves as the catalytic Nucleophile. The disordered stretch occupies residues E426 to N452. Positions Q430–N452 are enriched in polar residues. H503 (proton acceptor) is an active-site residue. S832 is modified (phosphoserine). Disordered regions lie at residues S835–A863, L880–T971, and G985–K1025. The span at S882–S900 shows a compositional bias: low complexity. 2 positions are modified to phosphoserine: S911 and S934. The segment covering H930–F939 has biased composition (polar residues). Positions S941–N951 are enriched in basic and acidic residues. The segment covering S954–D970 has biased composition (low complexity). Basic and acidic residues predominate over residues K998–W1007. Over residues D1008–D1021 the composition is skewed to acidic residues. A Phosphoserine modification is found at S1014. A Phosphothreonine modification is found at T1016. S1018 carries the post-translational modification Phosphoserine.

Belongs to the peptidase C19 family. USP47 subfamily. In terms of assembly, interacts with BTRC and FBXW11. Interacts with POLB.

It is found in the cytoplasm. The enzyme catalyses Thiol-dependent hydrolysis of ester, thioester, amide, peptide and isopeptide bonds formed by the C-terminal Gly of ubiquitin (a 76-residue protein attached to proteins as an intracellular targeting signal).. Its function is as follows. Ubiquitin-specific protease that specifically deubiquitinates monoubiquitinated DNA polymerase beta (POLB), stabilizing POLB thereby playing a role in base-excision repair (BER). Acts as a regulator of cell growth and genome integrity. May also indirectly regulate CDC25A expression at a transcriptional level. In Mus musculus (Mouse), this protein is Ubiquitin carboxyl-terminal hydrolase 47 (Usp47).